The sequence spans 205 residues: Probable GTP-binding protein EngB (205 aa).

An EngB-type G domain is found at 29–203 (QGAEIAFIGR…KAVLSQWFRS (175 aa)). Residues 37 to 44 (GRSNAGKS), 64 to 68 (GRTQM), 82 to 85 (DLPG), 149 to 152 (TKSD), and 182 to 184 (FSS) each bind GTP. Mg(2+)-binding residues include Ser-44 and Thr-66.

It belongs to the TRAFAC class TrmE-Era-EngA-EngB-Septin-like GTPase superfamily. EngB GTPase family. Mg(2+) is required as a cofactor.

Its function is as follows. Necessary for normal cell division and for the maintenance of normal septation. This Coxiella burnetii (strain RSA 493 / Nine Mile phase I) protein is Probable GTP-binding protein EngB.